Here is a 215-residue protein sequence, read N- to C-terminus: Deoxyribose-phosphate aldolase (215 aa).

The Proton donor/acceptor role is filled by aspartate 89. Residue lysine 150 is the Schiff-base intermediate with acetaldehyde of the active site. Lysine 174 serves as the catalytic Proton donor/acceptor.

The protein belongs to the DeoC/FbaB aldolase family. DeoC type 1 subfamily.

Its subcellular location is the cytoplasm. The enzyme catalyses 2-deoxy-D-ribose 5-phosphate = D-glyceraldehyde 3-phosphate + acetaldehyde. It participates in carbohydrate degradation; 2-deoxy-D-ribose 1-phosphate degradation; D-glyceraldehyde 3-phosphate and acetaldehyde from 2-deoxy-alpha-D-ribose 1-phosphate: step 2/2. In terms of biological role, catalyzes a reversible aldol reaction between acetaldehyde and D-glyceraldehyde 3-phosphate to generate 2-deoxy-D-ribose 5-phosphate. The sequence is that of Deoxyribose-phosphate aldolase from Natronomonas pharaonis (strain ATCC 35678 / DSM 2160 / CIP 103997 / JCM 8858 / NBRC 14720 / NCIMB 2260 / Gabara) (Halobacterium pharaonis).